Reading from the N-terminus, the 90-residue chain is PIK3R3 upstream open reading frame protein (90 aa).

The tract at residues 1 to 63 (MGPSQLVRAP…PASEATNISD (63 aa)) is disordered. Over residues 27–46 (PRRRCPSMFKCSRRTYRQKP) the composition is skewed to basic residues. Residues 50–63 (TATNPASEATNISD) show a composition bias toward polar residues.

In Mus musculus (Mouse), this protein is PIK3R3 upstream open reading frame protein.